The chain runs to 92 residues: Large ribosomal subunit protein eL31 (92 aa).

Belongs to the eukaryotic ribosomal protein eL31 family.

The polypeptide is Large ribosomal subunit protein eL31 (Pyrobaculum arsenaticum (strain DSM 13514 / JCM 11321 / PZ6)).